The following is a 274-amino-acid chain: Thymidylate synthase (274 aa).

Arg-21 provides a ligand contact to dUMP. His-51 provides a ligand contact to (6R)-5,10-methylene-5,6,7,8-tetrahydrofolate. A dUMP-binding site is contributed by Arg-123–Arg-124. Cys-156 acts as the Nucleophile in catalysis. Residues Arg-176–Asp-179, Asn-187, and His-217–Tyr-219 each bind dUMP. Asp-179 is a binding site for (6R)-5,10-methylene-5,6,7,8-tetrahydrofolate. Ser-273 provides a ligand contact to (6R)-5,10-methylene-5,6,7,8-tetrahydrofolate.

It belongs to the thymidylate synthase family. Bacterial-type ThyA subfamily. In terms of assembly, homodimer.

It localises to the cytoplasm. It catalyses the reaction dUMP + (6R)-5,10-methylene-5,6,7,8-tetrahydrofolate = 7,8-dihydrofolate + dTMP. It functions in the pathway pyrimidine metabolism; dTTP biosynthesis. In terms of biological role, catalyzes the reductive methylation of 2'-deoxyuridine-5'-monophosphate (dUMP) to 2'-deoxythymidine-5'-monophosphate (dTMP) while utilizing 5,10-methylenetetrahydrofolate (mTHF) as the methyl donor and reductant in the reaction, yielding dihydrofolate (DHF) as a by-product. This enzymatic reaction provides an intracellular de novo source of dTMP, an essential precursor for DNA biosynthesis. This Francisella tularensis subsp. tularensis (strain SCHU S4 / Schu 4) protein is Thymidylate synthase.